Reading from the N-terminus, the 529-residue chain is MQQRRPVRRALLSVSDKAGIVEFAQALSARGVELLSTGGTARLLADKGLPVTEVSDYTGFPEMMDGRVKTLHPKVHGGILGRRGQDDGIMEQHGIAPIDMVVVNLYPFAQTVAREGCSLEDAVENIDIGGPTMVRSAAKNHKDVAIVVKSSDYDAIIKEMDSNDGSLTLDTRFDLAIKAFEHTAAYDSMIANYFGSMVPAYHGESKEAAGRFPRTLNLNFIKKQDMRYGENSHQQAAFYIEENVQEASVATAQQVQGKALSYNNIADTDAALECVKEFSEPACVIVKHANPCGVAVSTSILDAYDRAYKTDPTSAFGGIIAFNRELDAETAQAIISRQFVEVIIAPSASEDALKITAAKQNVRVLTCGQWAERVPGLDFKRVNGGLLVQDRDLGMVTEGELRVVSKRQPTEQELRDALFCWKVAKFVKSNAIVYAKENMTIGIGAGQMSRVYSAKIAGIKAGDEGLEVKGSAMASDAFFPFRDGIDAAAAVGVSCVIQPGGSIRDDEVIAAADEHGIAMIFTDMRHFRH.

The 148-residue stretch at 1–148 (MQQRRPVRRA…KNHKDVAIVV (148 aa)) folds into the MGS-like domain.

The protein belongs to the PurH family.

The catalysed reaction is (6R)-10-formyltetrahydrofolate + 5-amino-1-(5-phospho-beta-D-ribosyl)imidazole-4-carboxamide = 5-formamido-1-(5-phospho-D-ribosyl)imidazole-4-carboxamide + (6S)-5,6,7,8-tetrahydrofolate. It carries out the reaction IMP + H2O = 5-formamido-1-(5-phospho-D-ribosyl)imidazole-4-carboxamide. It participates in purine metabolism; IMP biosynthesis via de novo pathway; 5-formamido-1-(5-phospho-D-ribosyl)imidazole-4-carboxamide from 5-amino-1-(5-phospho-D-ribosyl)imidazole-4-carboxamide (10-formyl THF route): step 1/1. Its pathway is purine metabolism; IMP biosynthesis via de novo pathway; IMP from 5-formamido-1-(5-phospho-D-ribosyl)imidazole-4-carboxamide: step 1/1. The sequence is that of Bifunctional purine biosynthesis protein PurH from Citrobacter koseri (strain ATCC BAA-895 / CDC 4225-83 / SGSC4696).